Reading from the N-terminus, the 243-residue chain is CR(VI) reductase (243 aa).

This sequence belongs to the flavin oxidoreductase frp family. It depends on FMN as a cofactor.

The sequence is that of CR(VI) reductase (chrR) from Pseudomonas sp. (strain G-1).